The following is a 262-amino-acid chain: DNA-directed RNA polymerase subunit Rpo3 (262 aa).

This sequence belongs to the archaeal Rpo3/eukaryotic RPB3 RNA polymerase subunit family. In terms of assembly, part of the RNA polymerase complex.

It localises to the cytoplasm. The catalysed reaction is RNA(n) + a ribonucleoside 5'-triphosphate = RNA(n+1) + diphosphate. Functionally, DNA-dependent RNA polymerase (RNAP) catalyzes the transcription of DNA into RNA using the four ribonucleoside triphosphates as substrates. The polypeptide is DNA-directed RNA polymerase subunit Rpo3 (Pyrobaculum islandicum (strain DSM 4184 / JCM 9189 / GEO3)).